The chain runs to 750 residues: Catalase A (750 aa).

The disordered stretch occupies residues 30-49 (ERDTADAHTQQPLTTDHGVR). Catalysis depends on residues His93 and Asn166. Tyr380 is a binding site for heme.

Belongs to the catalase family. It depends on heme as a cofactor.

The protein localises to the peroxisome matrix. The enzyme catalyses 2 H2O2 = O2 + 2 H2O. Catalyzes the degradation of hydrogen peroxide (H(2)O(2)) generated by peroxisomal oxidases to water and oxygen, thereby protecting cells from the toxic effects of hydrogen peroxide. The protein is Catalase A (catA) of Aspergillus fumigatus (strain ATCC MYA-4609 / CBS 101355 / FGSC A1100 / Af293) (Neosartorya fumigata).